We begin with the raw amino-acid sequence, 102 residues long: NADH-quinone oxidoreductase subunit K 1 (102 aa).

A run of 3 helical transmembrane segments spans residues 5 to 25 (LSHYLTVSAILFTLGVFGIFL), 31 to 51 (IVILMSVELILLSVNINMVAF), and 65 to 85 (LFILTVAAAEAAIGLAILVVF).

Belongs to the complex I subunit 4L family. As to quaternary structure, NDH-1 is composed of 14 different subunits. Subunits NuoA, H, J, K, L, M, N constitute the membrane sector of the complex.

The protein localises to the cell inner membrane. It catalyses the reaction a quinone + NADH + 5 H(+)(in) = a quinol + NAD(+) + 4 H(+)(out). NDH-1 shuttles electrons from NADH, via FMN and iron-sulfur (Fe-S) centers, to quinones in the respiratory chain. The immediate electron acceptor for the enzyme in this species is believed to be ubiquinone. Couples the redox reaction to proton translocation (for every two electrons transferred, four hydrogen ions are translocated across the cytoplasmic membrane), and thus conserves the redox energy in a proton gradient. The protein is NADH-quinone oxidoreductase subunit K 1 of Rhizobium etli (strain CIAT 652).